A 370-amino-acid polypeptide reads, in one-letter code: 3-dehydroquinate synthase (370 aa).

Residues Gly107 to Asp111, Thr131 to Ser132, Lys144, and Lys153 contribute to the NAD(+) site. Positions 186, 249, and 267 each coordinate Zn(2+).

This sequence belongs to the sugar phosphate cyclases superfamily. Dehydroquinate synthase family. It depends on Co(2+) as a cofactor. Requires Zn(2+) as cofactor. The cofactor is NAD(+).

It localises to the cytoplasm. The enzyme catalyses 7-phospho-2-dehydro-3-deoxy-D-arabino-heptonate = 3-dehydroquinate + phosphate. The protein operates within metabolic intermediate biosynthesis; chorismate biosynthesis; chorismate from D-erythrose 4-phosphate and phosphoenolpyruvate: step 2/7. Catalyzes the conversion of 3-deoxy-D-arabino-heptulosonate 7-phosphate (DAHP) to dehydroquinate (DHQ). The polypeptide is 3-dehydroquinate synthase (Roseobacter denitrificans (strain ATCC 33942 / OCh 114) (Erythrobacter sp. (strain OCh 114))).